Here is a 668-residue protein sequence, read N- to C-terminus: UvrABC system protein B (668 aa).

A Helicase ATP-binding domain is found at 25–176 (THLQSGHSRQ…DQRQLLRNLA (152 aa)). Residue 38–45 (GATGTGKT) participates in ATP binding. Positions 91–114 (YYDYYQPEAYIPVTDTFIEKTASI) match the Beta-hairpin motif. Residues 429 to 591 (QVDDLLAEIQ…ITPQPVKKGS (163 aa)) enclose the Helicase C-terminal domain. The UVR domain occupies 626–661 (PELITQLEAQMKEAAKNLEFEEAAKYRDRIKNLRSK).

It belongs to the UvrB family. Forms a heterotetramer with UvrA during the search for lesions. Interacts with UvrC in an incision complex.

It is found in the cytoplasm. In terms of biological role, the UvrABC repair system catalyzes the recognition and processing of DNA lesions. A damage recognition complex composed of 2 UvrA and 2 UvrB subunits scans DNA for abnormalities. Upon binding of the UvrA(2)B(2) complex to a putative damaged site, the DNA wraps around one UvrB monomer. DNA wrap is dependent on ATP binding by UvrB and probably causes local melting of the DNA helix, facilitating insertion of UvrB beta-hairpin between the DNA strands. Then UvrB probes one DNA strand for the presence of a lesion. If a lesion is found the UvrA subunits dissociate and the UvrB-DNA preincision complex is formed. This complex is subsequently bound by UvrC and the second UvrB is released. If no lesion is found, the DNA wraps around the other UvrB subunit that will check the other stand for damage. This chain is UvrABC system protein B, found in Acaryochloris marina (strain MBIC 11017).